A 314-amino-acid polypeptide reads, in one-letter code: Nodulation protein D 2 (314 aa).

The HTH lysR-type domain maps to 6-63 (LDLNLLVVLDALMTERNLTAAARSINLSQPAMSAAVARLRTNFRDDLFAMAGREFIPT). The H-T-H motif DNA-binding region spans 23–42 (LTAAARSINLSQPAMSAAVA).

Belongs to the LysR transcriptional regulatory family.

Its function is as follows. NodD regulates the expression of the nodABCFE genes which encode other nodulation proteins. NodD is also a negative regulator of its own expression. Binds flavonoids as inducers. The sequence is that of Nodulation protein D 2 (nodD2) from Rhizobium tropici.